The following is a 65-amino-acid chain: MPKMKSNKGASKRFKKTASGGFKCKQSHLRHILTKKSPKRKRQLRAKSMVHEADVKLVVRMLPYA.

The tract at residues Met-1–Gln-26 is disordered.

This sequence belongs to the bacterial ribosomal protein bL35 family.

In Idiomarina loihiensis (strain ATCC BAA-735 / DSM 15497 / L2-TR), this protein is Large ribosomal subunit protein bL35.